A 180-amino-acid polypeptide reads, in one-letter code: MIGELVKDKILIKNIEDARLIYKMGYYGKPIGISKPKSAEEINSELILSLIEGVYLVKKGKLEIVSNGERLDFERLYQIGVTQIPRFRILYSVYEDLREKGYVVRSGIKYGADFAVYTIGPGIEHAPYLVIALDENSQISSNEILGFGRVSHSTRKELILGIVNLTNGKIRYIMFKWLKM.

Active-site residues include tyrosine 117, histidine 125, and lysine 156.

This sequence belongs to the tRNA-intron endonuclease family. Archaeal short subfamily. Homotetramer; although the tetramer contains four active sites, only two participate in the cleavage. Therefore, it should be considered as a dimer of dimers.

It carries out the reaction pretRNA = a 3'-half-tRNA molecule with a 5'-OH end + a 5'-half-tRNA molecule with a 2',3'-cyclic phosphate end + an intron with a 2',3'-cyclic phosphate and a 5'-hydroxyl terminus.. Endonuclease that removes tRNA introns. Cleaves pre-tRNA at the 5'- and 3'-splice sites to release the intron. The products are an intron and two tRNA half-molecules bearing 2',3' cyclic phosphate and 5'-OH termini. Recognizes a pseudosymmetric substrate in which 2 bulged loops of 3 bases are separated by a stem of 4 bp. This Sulfurisphaera tokodaii (strain DSM 16993 / JCM 10545 / NBRC 100140 / 7) (Sulfolobus tokodaii) protein is tRNA-splicing endonuclease.